We begin with the raw amino-acid sequence, 320 residues long: Cytochrome f (320 aa).

The first 35 residues, 1–35 (MQTRNTFSWIREEITRSISVSLMIYIITWASISSA), serve as a signal peptide directing secretion. Heme is bound by residues Y36, C56, C59, and H60. Residues 286–305 (VQGLLFFLGSVVLAQIFLVL) form a helical membrane-spanning segment.

Belongs to the cytochrome f family. As to quaternary structure, the 4 large subunits of the cytochrome b6-f complex are cytochrome b6, subunit IV (17 kDa polypeptide, petD), cytochrome f and the Rieske protein, while the 4 small subunits are PetG, PetL, PetM and PetN. The complex functions as a dimer. Heme serves as cofactor. In terms of processing, purified from leaves as a water-soluble monomeric protein with a mass of 28.16 kDa, cleavage occurs after Gln-287 and separates the heme-binding from the membrane.

It localises to the plastid. It is found in the chloroplast thylakoid membrane. Its function is as follows. Component of the cytochrome b6-f complex, which mediates electron transfer between photosystem II (PSII) and photosystem I (PSI), cyclic electron flow around PSI, and state transitions. The polypeptide is Cytochrome f (petA) (Brassica rapa subsp. rapa (Turnip)).